A 355-amino-acid polypeptide reads, in one-letter code: Peptide chain release factor 1 (355 aa).

N5-methylglutamine is present on Gln233.

This sequence belongs to the prokaryotic/mitochondrial release factor family. Post-translationally, methylated by PrmC. Methylation increases the termination efficiency of RF1.

It is found in the cytoplasm. Its function is as follows. Peptide chain release factor 1 directs the termination of translation in response to the peptide chain termination codons UAG and UAA. This is Peptide chain release factor 1 from Syntrophomonas wolfei subsp. wolfei (strain DSM 2245B / Goettingen).